We begin with the raw amino-acid sequence, 210 residues long: Na(+)-translocating NADH-quinone reductase subunit D (210 aa).

Helical transmembrane passes span 9–29 (SVLIGPIVSNNPIALQILGVC), 42–62 (LVMTIALTAVCALSNLFISLI), 72–92 (IIVQMTIIASLVIVVDQVLQA), 103–123 (VFVGLIITNCIVMGRAEAFAM), 131–151 (FMDGLGNGLGYGAILLSVGFV), and 178–198 (NGLLLLPPSAFFLIGALIWII).

The protein belongs to the NqrDE/RnfAE family. As to quaternary structure, composed of six subunits; NqrA, NqrB, NqrC, NqrD, NqrE and NqrF.

It is found in the cell inner membrane. The catalysed reaction is a ubiquinone + n Na(+)(in) + NADH + H(+) = a ubiquinol + n Na(+)(out) + NAD(+). In terms of biological role, NQR complex catalyzes the reduction of ubiquinone-1 to ubiquinol by two successive reactions, coupled with the transport of Na(+) ions from the cytoplasm to the periplasm. NqrA to NqrE are probably involved in the second step, the conversion of ubisemiquinone to ubiquinol. The sequence is that of Na(+)-translocating NADH-quinone reductase subunit D from Shewanella piezotolerans (strain WP3 / JCM 13877).